Here is a 353-residue protein sequence, read N- to C-terminus: A-kinase anchor protein 7 isoforms delta and gamma (353 aa).

Basic and acidic residues-rich tracts occupy residues 1–22 and 66–76; these read MERP…RGEE and RSKENRGDRND. Disordered regions lie at residues 1–33 and 47–85; these read MERP…SPVG and DDCG…KKAK. AMP-binding positions include Thr-134 and 224-226; that span reads HLT. CMP contacts are provided by residues Thr-134 and 224–226; that span reads HLT. Residues 299 to 353 form a PKA-RII-alpha subunit binding domain region; that stretch reads AELVRLSKRLVENAVLKAVQQYLEETQNKKQPGEGNSVKAEEGDRNGDGSDNNRK. Positions 300–324 are RI-alpha-binding; sequence ELVRLSKRLVENAVLKAVQQYLEET. The segment at 301 to 314 is RII-binding; it reads LVRLSKRLVENAVL. Residues 321–353 are disordered; sequence LEETQNKKQPGEGNSVKAEEGDRNGDGSDNNRK. Positions 337–353 are enriched in basic and acidic residues; it reads KAEEGDRNGDGSDNNRK.

In terms of assembly, binds cAMP-dependent protein kinase (PKA). Interacts with PRKCA; only the cytoplasmic form is capable of interacting with PRKCA. As to expression, expressed highly in the heart, and moderately in brain, lung, liver, kidney and testis. Hardly detectable in spleen and skeletal muscle. In kidney, isoform Delta is expressed in the principal cells of the IMCD.

It is found in the nucleus. The protein localises to the cytoplasm. Its subcellular location is the cell membrane. Probably targets cAMP-dependent protein kinase (PKA) to the cellular membrane or cytoskeletal structures. The membrane-associated form reduces epithelial sodium channel (ENaC) activity, whereas the free cytoplasmic form may negatively regulate ENaC channel feedback inhibition by intracellular sodium. Isoform Delta may be involved in shuttling aquaporin-2 (AQP2) to the plasma membrane. In Rattus norvegicus (Rat), this protein is A-kinase anchor protein 7 isoforms delta and gamma.